Reading from the N-terminus, the 103-residue chain is uncharacterized protein (103 aa).

The chain crosses the membrane as a helical span at residues 37–57 (FILLSSLLIGGLLITIACYHI).

The protein localises to the membrane. This is an uncharacterized protein from Saccharomyces cerevisiae (strain ATCC 204508 / S288c) (Baker's yeast).